The sequence spans 252 residues: MKILKYEDEKYEVLVQNNVFIKDKKSGEYYKNSLNSLSDKQLLRFKMYKEKVSPKFFYLFLSFTALMFILNYIHLIKLQNGLSSVFYGWKMWIIIVIYFIMNIVLHELGHIYSLKFFGKNFDKVGFKLNFYVFPAFYVQLNETYMLSRNEKIIVHLFGLFINYLLINTLELINQFTFSSEALTMAFMLFSSTLLWNLIPILNSDGYKILLAFLSLDEYSRFKTNHWLVLTIQIIGIGLAVNSVVHWILYIVN.

2 consecutive transmembrane segments (helical) span residues 56 to 76 (FFYLFLSFTALMFILNYIHLI) and 85 to 105 (VFYGWKMWIIIVIYFIMNIVL). Residue His106 participates in Zn(2+) binding. Residue Glu107 is part of the active site. His110 serves as a coordination point for Zn(2+). Helical transmembrane passes span 152–172 (IIVHLFGLFINYLLINTLELI), 181–201 (ALTMAFMLFSSTLLWNLIPIL), and 231–251 (IQIIGIGLAVNSVVHWILYIV).

The protein belongs to the peptidase M50B family. Requires Zn(2+) as cofactor.

Its subcellular location is the cell membrane. Required for production of the modified peptide YydF. May process the precursor form of YydF to release the active peptide (Potential). This chain is Putative peptide zinc metalloprotease protein YydH (yydH), found in Bacillus subtilis (strain 168).